Reading from the N-terminus, the 441-residue chain is C4-dicarboxylate transport protein (441 aa).

The next 8 membrane-spanning stretches (helical) occupy residues 9 to 29 (SLYFQVIVAIICGVLLGHFMP), 45 to 65 (LVKMMITPIIFCTVVVGIAGM), 79 to 99 (LLYFEVVTTLALIIGLVVVNV), 145 to 165 (AFAEGEILQVLLFSVLFGFAL), 187 to 207 (FAAIGFIMKLAPIGAFGAMAF), 220 to 240 (LAALMGSFYLTCLLFIGLVLG), 308 to 328 (IYLTMAAIFIAQACGIELTLT), and 356 to 376 (AATLATVPDIPVAGLALILGI).

It belongs to the dicarboxylate/amino acid:cation symporter (DAACS) (TC 2.A.23) family.

It is found in the cell inner membrane. In terms of biological role, responsible for the transport of dicarboxylates such as succinate, fumarate, and malate from the periplasm across the membrane. In Laribacter hongkongensis (strain HLHK9), this protein is C4-dicarboxylate transport protein.